A 116-amino-acid polypeptide reads, in one-letter code: Ly-6/neurotoxin-like protein 1 (116 aa).

The signal sequence occupies residues 1-20 (MTHLLTVFLVALMGLPVAQA). Positions 21-104 (LECHVCAYNG…GFATPVTLAL (84 aa)) constitute a UPAR/Ly6 domain. Disulfide bonds link cysteine 23-cysteine 46, cysteine 26-cysteine 33, cysteine 39-cysteine 64, cysteine 68-cysteine 85, and cysteine 86-cysteine 91. Asparagine 92 is lipidated: GPI-anchor amidated asparagine. A propeptide spans 93 to 116 (GAGFATPVTLALVPALLATFWSLL) (removed in mature form).

Interacts with nAChRs containing alpha-4:beta-2 (CHRNA4:CHRNB2) and alpha-7 (CHRNA7) subunits. Interacts with CHRNA4 probably in the endoplasmic reticulum prior to nAChR pentameric assembly. Interacts with KCNA2/Potassium voltage-gated channel subfamily A member 2. In terms of tissue distribution, expressed in neurons of multiple regions in the CNS, including the cerebral cortex, thalamus, substantia nigra, cerebellum, amygdala and hippocampus. Also expressed in kidney, heart and thymus, but at lower levels than in the brain. Expressed in the primary visual cortex (V1) and the lateral geniculate nucleus (at protein level).

It localises to the cell membrane. The protein localises to the cell projection. The protein resides in the dendrite. Its subcellular location is the endoplasmic reticulum. In terms of biological role, acts in different tissues through interaction to nicotinic acetylcholine receptors (nAChRs). The proposed role as modulator of nAChR activity seems to be dependent on the nAChR subtype and stoichiometry, and to involve an effect on nAChR trafficking and its cell surface expression, and on single channel properties of the nAChR inserted in the plasma membrane. Modulates functional properties of nicotinic acetylcholine receptors (nAChRs) to prevent excessive excitation, and hence neurodegeneration. Enhances desensitization by increasing both the rate and extent of desensitization of alpha-4:beta-2-containing nAChRs and slowing recovery from desensitization. Promotes large amplitude ACh-evoked currents through alpha-4:beta-2 nAChRs. Is involved in regulation of the nAChR pentameric assembly in the endoplasmic reticulum. Shifts stoichiometry from high sensitivity alpha-4(2):beta-2(3) to low sensitivity alpha-4(3):beta-2(2) nAChR. In vitro modulates alpha-3:beta-4-containing nAChRs. Reduces cell surface expression of (alpha-3:beta-4)(2):beta-4 and (alpha-3:beta-4)(2):alpha-5 nAChRs suggesting an interaction with nAChR alpha-3(-):(+)beta-4 subunit interfaces and an allosteric mode. Corresponding single channel effects characterized by decreased unitary conductance, altered burst proportions and enhanced desensitization/inactivation seem to depend on nAChR alpha:alpha subunit interfaces and are greater in (alpha-3:beta-2)(2):alpha-3 when compared to (alpha-3:beta-2)(2):alpha-5 nAChRs. Prevents plasticity in the primary visual cortex late in life. The chain is Ly-6/neurotoxin-like protein 1 from Mus musculus (Mouse).